A 446-amino-acid chain; its full sequence is Zinc finger protein 19 (446 aa).

The 72-residue stretch at 2–73 (VTFEDVAVHF…EAQDDPPAET (72 aa)) folds into the KRAB domain. 9 consecutive C2H2-type zinc fingers follow at residues 149-171 (FICE…QRIH), 177-199 (FECS…QRIH), 205-227 (YQCE…QRIH), 233-255 (YYCT…QRIH), 261-283 (YECN…QKIH), 289-311 (YECN…QRIH), 317-339 (YSCK…QRIH), 345-367 (FDCV…LRIH), and 373-395 (YVCD…QRIH). The C2H2-type 10; degenerate zinc-finger motif lies at 401–423 (YEYSKYEKAFGTSSQLGHLEHVH).

It belongs to the krueppel C2H2-type zinc-finger protein family.

The protein resides in the nucleus. Functionally, may be involved in transcriptional regulation. This Pongo abelii (Sumatran orangutan) protein is Zinc finger protein 19 (ZNF19).